A 688-amino-acid chain; its full sequence is Sciellin (688 aa).

Residues 1–25 are compositionally biased toward polar residues; it reads MSNVTLRKMSPTGNEMKSTTQGTTR. A disordered region spans residues 1–29; the sequence is MSNVTLRKMSPTGNEMKSTTQGTTRKQQD. The residue at position 83 (K83) is an N6-acetyllysine. Positions 134-231 are disordered; the sequence is QPGGSLNANT…TNRSAERNIR (98 aa). The span at 140–154 shows a compositional bias: low complexity; it reads NANTSNTIASTSATT. Over residues 186–195 the composition is skewed to pro residues; it reads VHPPIPPKPS. 16 consecutive repeat copies span residues 251-266, 267-286, 287-306, 307-326, 327-346, 347-366, 367-386, 387-406, 407-426, 427-446, 447-465, 466-484, 485-504, 505-523, 524-543, and 544-563. Residues 251–563 are 16 X approximate tandem repeats; it reads GEELDNLIKM…NSHVSENKNG (313 aa). S289 is subject to Phosphoserine. Positions 340 to 373 are disordered; that stretch reads MNKTSRRSEDLDNATEVNPKGHENTTGKKDLDGL. Residues 358-373 show a composition bias toward basic and acidic residues; it reads PKGHENTTGKKDLDGL. S389 carries the phosphoserine modification. The 67-residue stretch at 619-685 folds into the LIM zinc-binding domain; that stretch reads DMCTYCRKPL…EPCYSKIMAK (67 aa).

In terms of tissue distribution, highly expressed in esophagus. It is also expressed in keratinocytes, amniotic tissue, foreskin stratum spinosum and stratum granulosum, hair follicle and nail.

The protein localises to the cytoplasm. It localises to the membrane. Its function is as follows. May function in the assembly or regulation of proteins in the cornified envelope. The LIM domain may be involved in homotypic or heterotypic associations and may function to localize sciellin to the cornified envelope. The polypeptide is Sciellin (SCEL) (Homo sapiens (Human)).